A 1425-amino-acid polypeptide reads, in one-letter code: Death-associated protein kinase dapk-1 (1425 aa).

The 262-residue stretch at tyrosine 28 to isoleucine 289 folds into the Protein kinase domain. ATP is bound by residues leucine 34–valine 42 and lysine 57. Aspartate 155 functions as the Proton acceptor in the catalytic mechanism. 10 ANK repeats span residues asparagine 392 to alanine 421, asparagine 425 to serine 454, threonine 458 to leucine 487, serine 491 to leucine 520, arginine 524 to alanine 553, aspartate 557 to histidine 586, histidine 590 to serine 619, asparagine 623 to leucine 652, glycine 810 to glutamate 841, and isoleucine 934 to threonine 963. Residues leucine 695–isoleucine 950 form the Roc domain. In terms of domain architecture, Death spans glutamate 1308–valine 1389.

The protein belongs to the protein kinase superfamily. CAMK Ser/Thr protein kinase family. DAP kinase subfamily. In terms of assembly, interacts with ptrn-1. Mg(2+) serves as cofactor. In terms of tissue distribution, expressed in epidermis, muscles and neurons.

The protein localises to the cytoplasm. Its subcellular location is the cytosol. It is found in the cytoskeleton. The catalysed reaction is L-seryl-[protein] + ATP = O-phospho-L-seryl-[protein] + ADP + H(+). It catalyses the reaction L-threonyl-[protein] + ATP = O-phospho-L-threonyl-[protein] + ADP + H(+). In terms of biological role, negative regulator of epidermal barrier repair and innate immune responses to wounding. The role in epidermal tissue integrity and wound healing is established through the inhibition of epidermal microtubule stability, possibly via the negative regulation of the microtubule minus-end binding protein ptrn-1. In epidermis, prevents expression of specific unc-44 isoforms probably by promoting nuclear localization of pinn-1, which in turn may affect sydn-1-ssup-72-mediated regulation of alternative polyadenylation of unc-44 mRNA. Appears to act downstream of or in parallel to muscarinic signaling in the regulation of autophagy. The chain is Death-associated protein kinase dapk-1 from Caenorhabditis elegans.